Reading from the N-terminus, the 286-residue chain is Beta-lactamase SHV-3 (286 aa).

The N-terminal stretch at Met1–Ala21 is a signal peptide. Ser66 functions as the Acyl-ester intermediate in the catalytic mechanism. An intrachain disulfide couples Cys73 to Cys119. The Proton acceptor role is filled by Glu164. Position 230-232 (Lys230–Gly232) interacts with substrate.

The protein belongs to the class-A beta-lactamase family.

The catalysed reaction is a beta-lactam + H2O = a substituted beta-amino acid. Its function is as follows. This enzyme hydrolyzes cefotaxime, ceftazidime and other broad spectrum cephalosporins. This chain is Beta-lactamase SHV-3 (bla), found in Klebsiella pneumoniae.